The sequence spans 215 residues: NADH-quinone oxidoreductase subunit C (215 aa).

This sequence belongs to the complex I 30 kDa subunit family. NDH-1 is composed of 14 different subunits. Subunits NuoB, C, D, E, F, and G constitute the peripheral sector of the complex.

It is found in the cell inner membrane. The catalysed reaction is a quinone + NADH + 5 H(+)(in) = a quinol + NAD(+) + 4 H(+)(out). In terms of biological role, NDH-1 shuttles electrons from NADH, via FMN and iron-sulfur (Fe-S) centers, to quinones in the respiratory chain. The immediate electron acceptor for the enzyme in this species is believed to be ubiquinone. Couples the redox reaction to proton translocation (for every two electrons transferred, four hydrogen ions are translocated across the cytoplasmic membrane), and thus conserves the redox energy in a proton gradient. The chain is NADH-quinone oxidoreductase subunit C from Francisella philomiragia subsp. philomiragia (strain ATCC 25017 / CCUG 19701 / FSC 153 / O#319-036).